A 510-amino-acid chain; its full sequence is Histidine ammonia-lyase (510 aa).

Residues 143 to 145 (ASG) constitute a cross-link (5-imidazolinone (Ala-Gly)). S144 is modified (2,3-didehydroalanine (Ser)).

The protein belongs to the PAL/histidase family. Post-translationally, contains an active site 4-methylidene-imidazol-5-one (MIO), which is formed autocatalytically by cyclization and dehydration of residues Ala-Ser-Gly.

The protein resides in the cytoplasm. The enzyme catalyses L-histidine = trans-urocanate + NH4(+). Its pathway is amino-acid degradation; L-histidine degradation into L-glutamate; N-formimidoyl-L-glutamate from L-histidine: step 1/3. This is Histidine ammonia-lyase from Yersinia pseudotuberculosis serotype I (strain IP32953).